A 443-amino-acid chain; its full sequence is Putative F-box/FBD/LRR-repeat protein At3g49030 (443 aa).

In terms of domain architecture, F-box spans 20-68 (EDRISELPEDLLLQILSDIPTENVIATSVLSKRWRSLWKMVPNLTFDFT). LRR repeat units lie at residues 74–100 (HQTFSENLYRSLTSHEASVLESLQLNF), 152–179 (ILEIQDYILLDLPSPVCLKSLRELRLYE), 180–205 (VHFKDEASVCNLLCGCPSLEVLSVHR), 218–252 (VPSLQRLTIYDFCIGGGKGGYVINAPSLKYLNIVG), 272–297 (ISDVSHIANENILESLTSVKRLSLES), and 320–345 (KEREWWNLLSRMLESSPKLQILKLTG). One can recognise an FBD domain in the interval 357-408 (NWNPPKCVPECLLFHLEKFLWTGYEWQRGDEKEVATYILENARLLKKATFST).

This chain is Putative F-box/FBD/LRR-repeat protein At3g49030, found in Arabidopsis thaliana (Mouse-ear cress).